The chain runs to 388 residues: Tryptophan synthase beta chain 1 (388 aa).

Residue K82 is modified to N6-(pyridoxal phosphate)lysine.

It belongs to the TrpB family. Tetramer of two alpha and two beta chains. Requires pyridoxal 5'-phosphate as cofactor.

It catalyses the reaction (1S,2R)-1-C-(indol-3-yl)glycerol 3-phosphate + L-serine = D-glyceraldehyde 3-phosphate + L-tryptophan + H2O. Its pathway is amino-acid biosynthesis; L-tryptophan biosynthesis; L-tryptophan from chorismate: step 5/5. In terms of biological role, the beta subunit is responsible for the synthesis of L-tryptophan from indole and L-serine. This Pyrococcus abyssi (strain GE5 / Orsay) protein is Tryptophan synthase beta chain 1 (trpB1).